The following is a 318-amino-acid chain: MTVKPELNEITPYLQFNRQEWGNFRKDTPLTLTESDLDKLQGQIEIVSLKEVTEIYLPLSRLLSFYVTARQTLQQATYQFLGKPEPKVPYIIGIAGSVAVGKSTTSRVLKALLSRWPDHPNVEVITTDGFLYSNAKLEKQGLMKRKGFPESYDMPSLLRVLNAIKSGQRNVRIPVYSHHYYDIVRGQYEIVDQPDIVILEGLNILQTGVRKTLQQLQVFVSDFFDFSLFVDAQAQVIQKWYIDRVLSFWRTTFKDPHSYFHYLTQMSETEVAAFAKHVWNEINKVNLMENILPYKNRAQLILEKAADHSIQKVYLRKI.

ATP is bound at residue 96 to 103 (GSVAVGKS).

Belongs to the prokaryotic pantothenate kinase family.

The protein resides in the cytoplasm. The enzyme catalyses (R)-pantothenate + ATP = (R)-4'-phosphopantothenate + ADP + H(+). Its pathway is cofactor biosynthesis; coenzyme A biosynthesis; CoA from (R)-pantothenate: step 1/5. This chain is Pantothenate kinase, found in Coxiella burnetii (strain CbuK_Q154) (Coxiella burnetii (strain Q154)).